Here is a 500-residue protein sequence, read N- to C-terminus: Probable cytosol aminopeptidase (500 aa).

Mn(2+) contacts are provided by K261 and D266. Residue K273 is part of the active site. Mn(2+) contacts are provided by D284, D343, and E345. R347 is a catalytic residue.

It belongs to the peptidase M17 family. Mn(2+) serves as cofactor.

Its subcellular location is the cytoplasm. It carries out the reaction Release of an N-terminal amino acid, Xaa-|-Yaa-, in which Xaa is preferably Leu, but may be other amino acids including Pro although not Arg or Lys, and Yaa may be Pro. Amino acid amides and methyl esters are also readily hydrolyzed, but rates on arylamides are exceedingly low.. The enzyme catalyses Release of an N-terminal amino acid, preferentially leucine, but not glutamic or aspartic acids.. Presumably involved in the processing and regular turnover of intracellular proteins. Catalyzes the removal of unsubstituted N-terminal amino acids from various peptides. This Wolbachia pipientis wMel protein is Probable cytosol aminopeptidase.